We begin with the raw amino-acid sequence, 609 residues long: UvrABC system protein C (609 aa).

One can recognise a GIY-YIG domain in the interval 19-97 (ASPGCYLWKS…IKKHNPRFNV (79 aa)). In terms of domain architecture, UVR spans 208–243 (ESLVSDLNIKMSNASERLDFEKAARYRDMLQRIQNF).

The protein belongs to the UvrC family. In terms of assembly, interacts with UvrB in an incision complex.

It is found in the cytoplasm. In terms of biological role, the UvrABC repair system catalyzes the recognition and processing of DNA lesions. UvrC both incises the 5' and 3' sides of the lesion. The N-terminal half is responsible for the 3' incision and the C-terminal half is responsible for the 5' incision. This Leptospira interrogans serogroup Icterohaemorrhagiae serovar Lai (strain 56601) protein is UvrABC system protein C.